Consider the following 80-residue polypeptide: Defensin-like protein 13 (80 aa).

A signal peptide spans 1 to 29; that stretch reads MAKSATIVTLFFAALVFFAALEAPMVVEA. Residue Q30 is modified to Pyrrolidone carboxylic acid. 4 disulfides stabilise this stretch: C33–C80, C44–C65, C50–C74, and C54–C76.

This sequence belongs to the DEFL family. As to quaternary structure, forms oligomers in its native state. Expressed predominantly in siliques and dry seeds.

Its subcellular location is the secreted. Confers broad-spectrum resistance to pathogens. Possesses antifungal activity sensitive to inorganic cations in vitro. The protein is Defensin-like protein 13 (PDF1.1) of Arabidopsis thaliana (Mouse-ear cress).